Consider the following 712-residue polypeptide: T-box transcription factor TBX2 (712 aa).

The segment at residues 109-287 (LEAKELWDQF…NNPFAKGFRD (179 aa)) is a DNA-binding region (T-box). The segment at 313–450 (PERDGAESDA…EGKEQGLAPL (138 aa)) is disordered. The span at 326-336 (DPPPAREPPTS) shows a compositional bias: pro residues. Phosphoserine occurs at positions 336, 342, and 360. 3 stretches are compositionally biased toward basic and acidic residues: residues 363-372 (EPERLSEERA), 391-409 (TEPERARERRSPERGKEPA), and 421-444 (SLEKERAEARRKDEGRKEAAEGKE). Residues 518–601 (GGNGGGGGPG…ATSAAAAAAA (84 aa)) form a repression domain 1 (RD1) region. Phosphoserine occurs at positions 622, 653, 657, and 676. Residues 637 to 687 (LTTGLASEGSKAAGGNSREPSPLPELALRKVGAPSRGALSPSGSAKEAANE) form a disordered region.

Binds DNA as a monomer. Interacts with PML (isoform PML-2, isoform PML-3 and isoform PML-4). Expressed primarily in adult in kidney, lung, and placenta. Weak expression in heart and ovary.

The protein localises to the nucleus. Functionally, transcription factor which acts as a transcriptional repressor. May also function as a transcriptional activator. Binds to the palindromic T site 5'-TTCACACCTAGGTGTGAA-3' DNA sequence, or a half-site, which are present in the regulatory region of several genes. Required for cardiac atrioventricular canal formation. May cooperate with NKX2.5 to negatively modulate expression of NPPA/ANF in the atrioventricular canal. May play a role as a positive regulator of TGFB2 expression, perhaps acting in concert with GATA4 in the developing outflow tract myocardium. Plays a role in limb pattern formation. Acts as a transcriptional repressor of ADAM10 gene expression, perhaps in concert with histone deacetylase HDAC1 as cofactor. Involved in branching morphogenesis in both developing lungs and adult mammary glands, via negative modulation of target genes; acting redundantly with TBX3. Required, together with TBX3, to maintain cell proliferation in the embryonic lung mesenchyme; perhaps acting downstream of SHH, BMP and TGFbeta signaling. Involved in modulating early inner ear development, acting independently of, and also redundantly with TBX3, in different subregions of the developing ear. Acts as a negative regulator of PML function in cellular senescence. Acts as a negative regulator of expression of CDKN1A/p21, IL33 and CCN4; repression of CDKN1A is enhanced in response to UV-induced stress, perhaps as a result of phosphorylation by p38 MAPK. Negatively modulates expression of CDKN2A/p14ARF and CDH1/E-cadherin. Plays a role in induction of the epithelial-mesenchymal transition (EMT). Plays a role in melanocyte proliferation, perhaps via regulation of cyclin CCND1. Involved in melanogenesis, acting via negative modulation of expression of DHICA oxidase/TYRP1 and P protein/OCA2. Involved in regulating retinal pigment epithelium (RPE) cell proliferation, perhaps via negatively modulating transcription of the transcription factor CEBPD. In Homo sapiens (Human), this protein is T-box transcription factor TBX2 (TBX2).